We begin with the raw amino-acid sequence, 215 residues long: UPF0502 protein YceH (215 aa).

Lysine 80 is subject to N6-acetyllysine.

The protein belongs to the UPF0502 family.

This Escherichia coli (strain K12 / MC4100 / BW2952) protein is UPF0502 protein YceH.